The chain runs to 603 residues: Methionine--tRNA ligase (603 aa).

Positions 14-24 (PYANGPRHIGH) match the 'HIGH' region motif. Residues cysteine 146, cysteine 149, cysteine 159, and cysteine 162 each coordinate Zn(2+). Residues 354-358 (KFSSS) carry the 'KMSKS' region motif. Residue serine 357 coordinates ATP.

The protein belongs to the class-I aminoacyl-tRNA synthetase family. MetG type 1 subfamily. As to quaternary structure, monomer. It depends on Zn(2+) as a cofactor.

It localises to the cytoplasm. It catalyses the reaction tRNA(Met) + L-methionine + ATP = L-methionyl-tRNA(Met) + AMP + diphosphate. Its function is as follows. Is required not only for elongation of protein synthesis but also for the initiation of all mRNA translation through initiator tRNA(fMet) aminoacylation. This Salinispora tropica (strain ATCC BAA-916 / DSM 44818 / JCM 13857 / NBRC 105044 / CNB-440) protein is Methionine--tRNA ligase.